Consider the following 209-residue polypeptide: Uracil phosphoribosyltransferase (209 aa).

5-phospho-alpha-D-ribose 1-diphosphate contacts are provided by residues Arg79, Arg104, and 131–139 (DPMLATGGS). Uracil-binding positions include Ile194 and 199 to 201 (GDA). Asp200 contacts 5-phospho-alpha-D-ribose 1-diphosphate.

It belongs to the UPRTase family. It depends on Mg(2+) as a cofactor.

It catalyses the reaction UMP + diphosphate = 5-phospho-alpha-D-ribose 1-diphosphate + uracil. The protein operates within pyrimidine metabolism; UMP biosynthesis via salvage pathway; UMP from uracil: step 1/1. Its activity is regulated as follows. Allosterically activated by GTP. Its function is as follows. Catalyzes the conversion of uracil and 5-phospho-alpha-D-ribose 1-diphosphate (PRPP) to UMP and diphosphate. This is Uracil phosphoribosyltransferase from Bacillus licheniformis (strain ATCC 14580 / DSM 13 / JCM 2505 / CCUG 7422 / NBRC 12200 / NCIMB 9375 / NCTC 10341 / NRRL NRS-1264 / Gibson 46).